We begin with the raw amino-acid sequence, 375 residues long: Queuine tRNA-ribosyltransferase (375 aa).

The Proton acceptor role is filled by D89. Substrate-binding positions include 89–93 (DSGGF), D143, Q187, and G214. An RNA binding region spans residues 245–251 (GVGKPED). Residue D264 is the Nucleophile of the active site. An RNA binding; important for wobble base 34 recognition region spans residues 269–273 (TRNAR). Positions 302, 304, 307, and 333 each coordinate Zn(2+).

Belongs to the queuine tRNA-ribosyltransferase family. In terms of assembly, homodimer. Within each dimer, one monomer is responsible for RNA recognition and catalysis, while the other monomer binds to the replacement base PreQ1. Zn(2+) serves as cofactor.

The catalysed reaction is 7-aminomethyl-7-carbaguanine + guanosine(34) in tRNA = 7-aminomethyl-7-carbaguanosine(34) in tRNA + guanine. The protein operates within tRNA modification; tRNA-queuosine biosynthesis. In terms of biological role, catalyzes the base-exchange of a guanine (G) residue with the queuine precursor 7-aminomethyl-7-deazaguanine (PreQ1) at position 34 (anticodon wobble position) in tRNAs with GU(N) anticodons (tRNA-Asp, -Asn, -His and -Tyr). Catalysis occurs through a double-displacement mechanism. The nucleophile active site attacks the C1' of nucleotide 34 to detach the guanine base from the RNA, forming a covalent enzyme-RNA intermediate. The proton acceptor active site deprotonates the incoming PreQ1, allowing a nucleophilic attack on the C1' of the ribose to form the product. After dissociation, two additional enzymatic reactions on the tRNA convert PreQ1 to queuine (Q), resulting in the hypermodified nucleoside queuosine (7-(((4,5-cis-dihydroxy-2-cyclopenten-1-yl)amino)methyl)-7-deazaguanosine). The protein is Queuine tRNA-ribosyltransferase of Escherichia coli O81 (strain ED1a).